We begin with the raw amino-acid sequence, 54 residues long: UPF0391 membrane protein Rmet_0093 (54 aa).

The next 2 membrane-spanning stretches (helical) occupy residues 5 to 25 (ALVF…GIAA) and 30 to 50 (IAKI…VMGL).

Belongs to the UPF0391 family.

It localises to the cell membrane. This chain is UPF0391 membrane protein Rmet_0093, found in Cupriavidus metallidurans (strain ATCC 43123 / DSM 2839 / NBRC 102507 / CH34) (Ralstonia metallidurans).